A 185-amino-acid chain; its full sequence is Ribosome-recycling factor (185 aa).

The protein belongs to the RRF family.

The protein localises to the cytoplasm. Functionally, responsible for the release of ribosomes from messenger RNA at the termination of protein biosynthesis. May increase the efficiency of translation by recycling ribosomes from one round of translation to another. This chain is Ribosome-recycling factor, found in Shewanella sp. (strain MR-4).